The primary structure comprises 244 residues: Dirigent protein 18 (244 aa).

Residues 1 to 25 (MMKQSPFSLLTSIFLIAALFTATTA) form the signal peptide.

Belongs to the plant dirigent protein family. Homodimer.

It localises to the secreted. It is found in the extracellular space. The protein localises to the apoplast. Dirigent proteins impart stereoselectivity on the phenoxy radical-coupling reaction, yielding optically active lignans from two molecules of coniferyl alcohol in the biosynthesis of lignans, flavonolignans, and alkaloids and thus plays a central role in plant secondary metabolism. The polypeptide is Dirigent protein 18 (DIR18) (Arabidopsis thaliana (Mouse-ear cress)).